The sequence spans 282 residues: tRNA pseudouridine synthase A (282 aa).

The active-site Nucleophile is the D53. A substrate-binding site is contributed by Y119.

The protein belongs to the tRNA pseudouridine synthase TruA family. Homodimer.

The catalysed reaction is uridine(38/39/40) in tRNA = pseudouridine(38/39/40) in tRNA. Its function is as follows. Formation of pseudouridine at positions 38, 39 and 40 in the anticodon stem and loop of transfer RNAs. In Corynebacterium efficiens (strain DSM 44549 / YS-314 / AJ 12310 / JCM 11189 / NBRC 100395), this protein is tRNA pseudouridine synthase A.